The sequence spans 110 residues: Small ribosomal subunit protein bS16 (110 aa).

Positions 87-110 are disordered; that stretch reads ARQNPIKAVPRKERKAQAEAAAKG.

It belongs to the bacterial ribosomal protein bS16 family.

The polypeptide is Small ribosomal subunit protein bS16 (Bradyrhizobium sp. (strain BTAi1 / ATCC BAA-1182)).